The following is a 230-amino-acid chain: Cyclin-U2-2 (230 aa).

The protein belongs to the cyclin family. Cyclin U/P subfamily. As to quaternary structure, interacts with CDKA-1. Expressed in roots and stems. Expressed in the shoot apex, leaf primordia and young leaves.

In Arabidopsis thaliana (Mouse-ear cress), this protein is Cyclin-U2-2 (CYCU2-2).